The chain runs to 457 residues: Adenylosuccinate synthetase isozyme 1 (457 aa).

The segment at 1-25 (MSGTRASNDRPPSAGGVKRGRLQHE) is disordered. GTP contacts are provided by residues 42-48 (GDEGKGK) and 70-72 (GHT). Aspartate 43 (proton acceptor) is an active-site residue. Mg(2+) is bound by residues aspartate 43 and glycine 70. Aspartate 43 lines the substrate pocket. IMP-binding positions include 43–46 (DEGK), 68–71 (NAGH), threonine 163, arginine 177, asparagine 256, threonine 271, and arginine 335. Histidine 71 serves as the catalytic Proton donor. 331–337 (VTTGRKR) lines the substrate pocket. Residues arginine 337, 363-365 (KLD), and 445-448 (GVGK) each bind GTP.

It belongs to the adenylosuccinate synthetase family. As to quaternary structure, homodimer. Mg(2+) serves as cofactor.

It localises to the cytoplasm. It catalyses the reaction IMP + L-aspartate + GTP = N(6)-(1,2-dicarboxyethyl)-AMP + GDP + phosphate + 2 H(+). It participates in purine metabolism; AMP biosynthesis via de novo pathway; AMP from IMP: step 1/2. In terms of biological role, component of the purine nucleotide cycle (PNC), which interconverts IMP and AMP to regulate the nucleotide levels in various tissues, and which contributes to glycolysis and ammoniagenesis. Catalyzes the first committed step in the biosynthesis of AMP from IMP. This is Adenylosuccinate synthetase isozyme 1 from Bos taurus (Bovine).